A 261-amino-acid chain; its full sequence is Adenosylcobinamide-GDP ribazoletransferase (261 aa).

7 consecutive transmembrane segments (helical) span residues 4-26 (GLNG…QIPW), 40-60 (LTGL…SPFL), 62-82 (PLVL…GLHL), 110-130 (VGAF…LLLM), 140-160 (FTWL…VQLI), 197-217 (CFLL…IWLF), and 237-257 (IGAS…TFFL).

Belongs to the CobS family. Mg(2+) is required as a cofactor.

It localises to the cell membrane. The catalysed reaction is alpha-ribazole + adenosylcob(III)inamide-GDP = adenosylcob(III)alamin + GMP + H(+). It carries out the reaction alpha-ribazole 5'-phosphate + adenosylcob(III)inamide-GDP = adenosylcob(III)alamin 5'-phosphate + GMP + H(+). It participates in cofactor biosynthesis; adenosylcobalamin biosynthesis; adenosylcobalamin from cob(II)yrinate a,c-diamide: step 7/7. Its function is as follows. Joins adenosylcobinamide-GDP and alpha-ribazole to generate adenosylcobalamin (Ado-cobalamin). Also synthesizes adenosylcobalamin 5'-phosphate from adenosylcobinamide-GDP and alpha-ribazole 5'-phosphate. This is Adenosylcobinamide-GDP ribazoletransferase from Halalkalibacterium halodurans (strain ATCC BAA-125 / DSM 18197 / FERM 7344 / JCM 9153 / C-125) (Bacillus halodurans).